A 158-amino-acid polypeptide reads, in one-letter code: Snaclec coagulation factor X-activating enzyme light chain 2 (158 aa).

The first 23 residues, M1–A23, serve as a signal peptide directing secretion. Disulfide bonds link C27/C38, C55/C152, and C127/C144. Residues Y34–K153 form the C-type lectin domain.

This sequence belongs to the snaclec family. In terms of assembly, heterotrimer; disulfide-linked. The heterotrimer consists of 1 heavy chain (a metalloproteinase) and 2 light chains: LC1 and LC2. As to expression, expressed by the venom gland.

Its subcellular location is the secreted. Regulatory subunit of the blood coagulation factor X-activating enzyme. Activates coagulation factor X (F10) by cleaving the Arg-Ile bond at position 234, activates coagulation factor IX (F9) by cleaving the Arg-Val bond at position 226 and is also able to activate protein C (PROC). May serve as an exosite by which the enzyme recognizes and binds to the Gla domain of factor X (F10) in a calcium-dependent manner. In Macrovipera lebetinus (Levantine viper), this protein is Snaclec coagulation factor X-activating enzyme light chain 2 (LC2).